Consider the following 361-residue polypeptide: GDSL esterase/lipase At2g40250 (361 aa).

The signal sequence occupies residues 1-28 (MNRNQHKPMFVTFLINILLLQLLNLTNA). S43 serves as the catalytic Nucleophile. Residues D337 and H340 contribute to the active site.

The protein belongs to the 'GDSL' lipolytic enzyme family.

The protein resides in the secreted. The sequence is that of GDSL esterase/lipase At2g40250 from Arabidopsis thaliana (Mouse-ear cress).